Here is a 193-residue protein sequence, read N- to C-terminus: uncharacterized protein (193 aa).

The chain crosses the membrane as a helical span at residues 119–143 (LAGSLLAATGMTLGIFGMGITGTCW).

The protein localises to the mitochondrion membrane. This is an uncharacterized protein from Saccharomyces cerevisiae (strain ATCC 204508 / S288c) (Baker's yeast).